The chain runs to 606 residues: Dihydroxy-acid dehydratase ilvC, mitochondrial (606 aa).

Cysteine 84 serves as a coordination point for [2Fe-2S] cluster. Aspartate 116 is a Mg(2+) binding site. Cysteine 157 contributes to the [2Fe-2S] cluster binding site. Position 158 (aspartate 158) interacts with Mg(2+). Residue cysteine 232 coordinates [2Fe-2S] cluster. Residue glutamate 485 participates in Mg(2+) binding. The Proton acceptor role is filled by serine 511.

Belongs to the IlvD/Edd family. [2Fe-2S] cluster is required as a cofactor. Mg(2+) serves as cofactor.

It localises to the mitochondrion. The catalysed reaction is (2R)-2,3-dihydroxy-3-methylbutanoate = 3-methyl-2-oxobutanoate + H2O. The enzyme catalyses (2R,3R)-2,3-dihydroxy-3-methylpentanoate = (S)-3-methyl-2-oxopentanoate + H2O. Its pathway is amino-acid biosynthesis; L-isoleucine biosynthesis; L-isoleucine from 2-oxobutanoate: step 3/4. It participates in amino-acid biosynthesis; L-valine biosynthesis; L-valine from pyruvate: step 3/4. DHAD activity is inhibited in dose-dependent manner by 2-hydroxy-3-methylbutyric acid with an IC(50) of about 8 mM. In terms of biological role, dihydroxyacid dehydratase that catalyzes the third step in the common pathway leading to biosynthesis of branched-chain amino acids. Catalyzes the dehydration of (2R,3R)-2,3-dihydroxy-3-methylpentanoate (2,3-dihydroxy-3-methylvalerate) into 2-oxo-3-methylpentanoate (2-oxo-3-methylvalerate) and of (2R)-2,3-dihydroxy-3-methylbutanoate (2,3-dihydroxyisovalerate) into 2-oxo-3-methylbutanoate (2-oxoisovalerate), the penultimate precursor to L-isoleucine and L-valine, respectively. IlvC and the branched-chain amino acid biosynthesis are crucial for virulence and may be a potential target to develop antifungal agents. This chain is Dihydroxy-acid dehydratase ilvC, mitochondrial, found in Aspergillus fumigatus (strain ATCC MYA-4609 / CBS 101355 / FGSC A1100 / Af293) (Neosartorya fumigata).